The primary structure comprises 51 residues: uncharacterized protein (51 aa).

This sequence to E.coli YdfA.

This is an uncharacterized protein from Escherichia coli O157:H7.